The sequence spans 198 residues: Putative 3-methyladenine DNA glycosylase (198 aa).

It belongs to the DNA glycosylase MPG family.

The sequence is that of Putative 3-methyladenine DNA glycosylase from Natranaerobius thermophilus (strain ATCC BAA-1301 / DSM 18059 / JW/NM-WN-LF).